Consider the following 235-residue polypeptide: Small ribosomal subunit protein uS5 (235 aa).

The 64-residue stretch at 60–123 (ENQEVLDIAL…NYAKMNIIEI (64 aa)) folds into the S5 DRBM domain. Positions 127, 132, 134, and 138 each coordinate Zn(2+).

This sequence belongs to the universal ribosomal protein uS5 family. In terms of assembly, part of the 30S ribosomal subunit. Contacts protein S4. Requires Zn(2+) as cofactor.

With S4 and S12 plays an important role in translational accuracy. This chain is Small ribosomal subunit protein uS5, found in Thermococcus kodakarensis (strain ATCC BAA-918 / JCM 12380 / KOD1) (Pyrococcus kodakaraensis (strain KOD1)).